Consider the following 155-residue polypeptide: Putative pre-16S rRNA nuclease (155 aa).

Belongs to the YqgF nuclease family.

The protein resides in the cytoplasm. Functionally, could be a nuclease involved in processing of the 5'-end of pre-16S rRNA. This chain is Putative pre-16S rRNA nuclease, found in Paramagnetospirillum magneticum (strain ATCC 700264 / AMB-1) (Magnetospirillum magneticum).